The primary structure comprises 1461 residues: MALSVDSSWHRWQWRVRDGFPHCPSETTPLLSPEKGRQSYNLTQQRVVFPNNSIFHQDWEEVSRRYPGNRTCTTKYTLFTFLPRNLFEQFHRWANLYFLFLVILNWMPSMEVFHREITMLPLAIVLFVIMIKDGMEDFKRHRFDKAINCSNIRIYERKEQTYVQKCWKDVRVGDFIQMKCNEIVPADILLLFSSDPNGICHLETASLDGETNLKQRCVVKGFSQQEVQFEPELFHNTIVCEKPNNHLNKFKGYMEHPDQTRTGFGCESLLLRGCTIRNTEMAVGIVIYAGHETKAMLNNSGPRYKRSKIERRMNIDIFFCIGILILMCLIGAVGHSIWNGTFEEHPPFDVPDANGSFLPSALGGFYMFLTMIILLQVLIPISLYVSIELVKLGQVFFLSNDLDLYDEETDLSIQCRALNIAEDLGQIQYIFSDKTGTLTENKMVFRRCTIMGSEYSHQENAKRLETPKELDSDGEEWTQYQCLSFSARWAQDPATMRSQKGAQPLRRSQSARVPIQGHYRQRSMGHRESSQPPVAFSSSIEKDVTPDKNLLTKVRDAALWLETLSDSRPAKASLSTTSSIADFFLALTICNSVMVSTTTEPRQRVTIKPSSKALGTSLEKIQQLFQKLKLLSLSQSFSSTAPSDTDLGESLGANVATTDSDERDDASVCSGGDSTDDGGYRSSMWDQGDILESGSGTSLEEALEAPATDLARPEFCYEAESPDEAALVHAAHAYSFTLVSRTPEQVTVRLPQGTCLTFSLLCTLGFDSVRKRMSVVVRHPLTGEIVVYTKGADSVIMDLLEDPACVPDINMEKKLRKIRARTQKHLDLYARDGLRTLCIAKKVVSEEDFRRWASFRREAEASLDNRDELLMETAQHLENQLTLLGATGIEDRLQEGVPDTIATLREAGIQLWVLTGDKQETAVNIAHSCRLLNQTDTVYTINTENQETCESILNCALEELKQFRELQKPDRKLFGFRLPSKTPSITSEAVVPEAGLVIDGKTLNAIFQGKLEKKFLELTQYCRSVLCCRSTPLQKSMIVKLVRDKLRVMTLSIGDGANDVSMIQAADIGIGISGQEGMQAVMSSDFAITRFKHLKKLLLVHGHWCYSRLARMVVYYLYKNVCYVNLLFWYQFFCGFSSSTMIDYWQMIFFNLFFTSLPPLVFGVLDKDISAETLLALPELYKSGQNSECYNLSTFWISMVDAFYQSLICFFIPYLAYKGSDIDVFTFGTPINTISLTTILLHQAMEMKTWTIFHGVVLLGSFLMYFLVSLLYNATCVICNSPTNPYWVMEGQLSNPTFYLVCFLTPVVALLPRYFFLSLQGTCGKSLISKAQKIDKLPPDKRNLEIQSWRSRQRPAPVPEVARPTHHPVSSITGQDFSASTPKSSNPPKRKHVEESVLHEQRCGTECMRDDSCSGDSSAQLSSGEHLLGPNRIMAYSRGQTDMCRCSKRSSHRRSQSSLTI.

The Cytoplasmic portion of the chain corresponds to 1–82; the sequence is MALSVDSSWH…TTKYTLFTFL (82 aa). Residues 83-104 traverse the membrane as a helical segment; that stretch reads PRNLFEQFHRWANLYFLFLVIL. Over 105–110 the chain is Exoplasmic loop; the sequence is NWMPSM. Residues 111–132 traverse the membrane as a helical segment; that stretch reads EVFHREITMLPLAIVLFVIMIK. Residues 133–316 lie on the Cytoplasmic side of the membrane; the sequence is DGMEDFKRHR…SKIERRMNID (184 aa). A helical transmembrane segment spans residues 317-338; it reads IFFCIGILILMCLIGAVGHSIW. At 339-368 the chain is on the exoplasmic loop side; it reads NGTFEEHPPFDVPDANGSFLPSALGGFYMF. Residues 369-390 traverse the membrane as a helical segment; that stretch reads LTMIILLQVLIPISLYVSIELV. Topologically, residues 391–1111 are cytoplasmic; the sequence is KLGQVFFLSN…GHWCYSRLAR (721 aa). The active-site 4-aspartylphosphate intermediate is D433. Positions 433, 434, and 435 each coordinate ATP. D433 contributes to the Mg(2+) binding site. T435 provides a ligand contact to Mg(2+). Polar residues-rich tracts occupy residues 496–511 and 530–539; these read MRSQKGAQPLRRSQSA and SQPPVAFSSS. Disordered stretches follow at residues 496 to 541 and 640 to 687; these read MRSQ…SSIE and TAPS…MWDQ. Residues E724, F766, K790, R835, T915, G916, D917, R1029, and K1035 each contribute to the ATP site. Residue D1055 participates in Mg(2+) binding. ATP-binding residues include N1058 and D1059. D1059 is a Mg(2+) binding site. Residues 1112–1132 traverse the membrane as a helical segment; the sequence is MVVYYLYKNVCYVNLLFWYQF. The Exoplasmic loop segment spans residues 1133–1144; sequence FCGFSSSTMIDY. The helical transmembrane segment at 1145–1164 threads the bilayer; the sequence is WQMIFFNLFFTSLPPLVFGV. Topologically, residues 1165–1194 are cytoplasmic; the sequence is LDKDISAETLLALPELYKSGQNSECYNLST. A helical transmembrane segment spans residues 1195-1216; sequence FWISMVDAFYQSLICFFIPYLA. At 1217 to 1223 the chain is on the exoplasmic loop side; that stretch reads YKGSDID. Residues 1224–1246 form a helical membrane-spanning segment; sequence VFTFGTPINTISLTTILLHQAME. Residues 1247–1252 lie on the Cytoplasmic side of the membrane; the sequence is MKTWTI. A helical membrane pass occupies residues 1253-1273; the sequence is FHGVVLLGSFLMYFLVSLLYN. Residues 1274-1291 are Exoplasmic loop-facing; the sequence is ATCVICNSPTNPYWVMEG. Residues 1292–1316 traverse the membrane as a helical segment; the sequence is QLSNPTFYLVCFLTPVVALLPRYFF. The Cytoplasmic portion of the chain corresponds to 1317-1461; that stretch reads LSLQGTCGKS…HRRSQSSLTI (145 aa). The tract at residues 1346–1397 is disordered; the sequence is IQSWRSRQRPAPVPEVARPTHHPVSSITGQDFSASTPKSSNPPKRKHVEESV. Over residues 1368 to 1387 the composition is skewed to polar residues; the sequence is PVSSITGQDFSASTPKSSNP.

This sequence belongs to the cation transport ATPase (P-type) (TC 3.A.3) family. Type IV subfamily. As to quaternary structure, component of a P4-ATPase flippase complex which consists of a catalytic alpha subunit ATP10B and an accessory beta subunit TMEM30A. Mg(2+) serves as cofactor. In terms of processing, autophosphorylated at the conserved aspartate of the P-type ATPase signature sequence. As to expression, expressed in predominantly in brain structures including medulla oblongata, substantia nigra and basal ganglia. Expressed in the gastrointestinal system with highest levels in the small intestine and colon. Also expressed at low levels in testis and thymus.

It localises to the late endosome membrane. Its subcellular location is the lysosome membrane. The protein resides in the endoplasmic reticulum membrane. It carries out the reaction ATP + H2O + phospholipidSide 1 = ADP + phosphate + phospholipidSide 2.. The enzyme catalyses a beta-D-glucosyl-(1&lt;-&gt;1')-N-acylsphing-4-enine(out) + ATP + H2O = a beta-D-glucosyl-(1&lt;-&gt;1')-N-acylsphing-4-enine(in) + ADP + phosphate + H(+). In terms of biological role, catalytic component of a P4-ATPase flippase complex, which catalyzes the hydrolysis of ATP coupled to the transport of glucosylceramide (GlcCer) from the outer to the inner leaflet of lysosome membranes. Plays an important role in the maintenance of lysosome membrane integrity and function in cortical neurons. This Homo sapiens (Human) protein is Phospholipid-transporting ATPase VB.